The chain runs to 716 residues: Polyribonucleotide nucleotidyltransferase (716 aa).

Asp-490 and Asp-496 together coordinate Mg(2+). Positions 556 to 615 (PKIETLTIPTDKIREVIGSGGKVIREIVETSGAKVDINDDGVIKIASNDQAAIKKAYDMI) constitute a KH domain. In terms of domain architecture, S1 motif spans 625–693 (GQIYTGKVVK…ERGKVRLGMK (69 aa)). A disordered region spans residues 695–716 (VDQETGQEIQPEKKEKEEAGEA). A compositionally biased stretch (basic and acidic residues) spans 704-716 (QPEKKEKEEAGEA).

It belongs to the polyribonucleotide nucleotidyltransferase family. It depends on Mg(2+) as a cofactor.

It localises to the cytoplasm. The enzyme catalyses RNA(n+1) + phosphate = RNA(n) + a ribonucleoside 5'-diphosphate. In terms of biological role, involved in mRNA degradation. Catalyzes the phosphorolysis of single-stranded polyribonucleotides processively in the 3'- to 5'-direction. This Cereibacter sphaeroides (strain ATCC 17029 / ATH 2.4.9) (Rhodobacter sphaeroides) protein is Polyribonucleotide nucleotidyltransferase.